A 116-amino-acid polypeptide reads, in one-letter code: Phosphoribosyl-AMP cyclohydrolase (116 aa).

Residue Asp-85 participates in Mg(2+) binding. Cys-86 is a Zn(2+) binding site. Residues Asp-87 and Asp-89 each contribute to the Mg(2+) site. Residues Cys-102 and Cys-109 each coordinate Zn(2+).

Belongs to the PRA-CH family. Homodimer. It depends on Mg(2+) as a cofactor. Zn(2+) serves as cofactor.

It is found in the cytoplasm. It carries out the reaction 1-(5-phospho-beta-D-ribosyl)-5'-AMP + H2O = 1-(5-phospho-beta-D-ribosyl)-5-[(5-phospho-beta-D-ribosylamino)methylideneamino]imidazole-4-carboxamide. It participates in amino-acid biosynthesis; L-histidine biosynthesis; L-histidine from 5-phospho-alpha-D-ribose 1-diphosphate: step 3/9. Its function is as follows. Catalyzes the hydrolysis of the adenine ring of phosphoribosyl-AMP. The protein is Phosphoribosyl-AMP cyclohydrolase of Thermobifida fusca (strain YX).